Consider the following 380-residue polypeptide: Probable protein phosphatase 2C 34 (380 aa).

Residues 32-335 enclose the PPM-type phosphatase domain; the sequence is AAGEFSMAAA…DDISVIVVYL (304 aa). 4 residues coordinate Mn(2+): Asp66, Gly67, Asp267, and Asp326.

It belongs to the PP2C family. The cofactor is Mg(2+). Requires Mn(2+) as cofactor.

It catalyses the reaction O-phospho-L-seryl-[protein] + H2O = L-seryl-[protein] + phosphate. It carries out the reaction O-phospho-L-threonyl-[protein] + H2O = L-threonyl-[protein] + phosphate. The chain is Probable protein phosphatase 2C 34 (BIPP2C2) from Oryza sativa subsp. indica (Rice).